A 111-amino-acid chain; its full sequence is Large ribosomal subunit protein P1 (111 aa).

Positions serine 65–alanine 89 are enriched in low complexity. Residues serine 65–aspartate 111 form a disordered region.

This sequence belongs to the eukaryotic ribosomal protein P1/P2 family. In terms of assembly, P1 and P2 exist as dimers at the large ribosomal subunit.

Its function is as follows. Plays an important role in the elongation step of protein synthesis. The chain is Large ribosomal subunit protein P1 from Caenorhabditis elegans.